The sequence spans 638 residues: Chaperone protein DnaK (638 aa).

A Phosphothreonine; by autocatalysis modification is found at Thr-196. Positions 592–638 are disordered; that stretch reads ASNLYQQPGAEAGAAPQPETNGQQESKGGDGAVNAEYEVIDGDDDKK. The span at 597 to 610 shows a compositional bias: low complexity; that stretch reads QQPGAEAGAAPQPE. Residues 629 to 638 are compositionally biased toward acidic residues; it reads EVIDGDDDKK.

Belongs to the heat shock protein 70 family.

Functionally, acts as a chaperone. The sequence is that of Chaperone protein DnaK from Chlorobaculum parvum (strain DSM 263 / NCIMB 8327) (Chlorobium vibrioforme subsp. thiosulfatophilum).